The primary structure comprises 172 residues: MGFKNICKQGSQLYLNGIFPERILARKLKNCAKSYPRTALTIEVLVSSVLGALKVILIPCASTYAALTLPLRALFNAIKTKSCQHLASYAMAWLLNILTIAVIIGLVFSLVFIPPPVVFISLGLLMSVTTSVTLFQVHKNLFPPYEPPPSRPHTPPPFADEYVPLISESYFD.

Transmembrane regions (helical) follow at residues Val-44 to Thr-68, Leu-86 to Leu-110, and Val-117 to Phe-135.

Belongs to the chlamydial CPn_0442/CT_006/TC_0274 family.

It is found in the cell membrane. This is an uncharacterized protein from Chlamydia pneumoniae (Chlamydophila pneumoniae).